The chain runs to 388 residues: Nuclear hormone receptor family member nhr-16 (388 aa).

Positions 11–86 (FLKCAICQES…VGMNPAGVQQ (76 aa)) form a DNA-binding region, nuclear receptor. NR C4-type zinc fingers lie at residues 14–34 (CAIC…CRAC) and 50–74 (CQGN…YIKC). The region spanning 115–387 (PPSSLMLHIP…DEFYNLMSGR (273 aa)) is the NR LBD domain.

It belongs to the nuclear hormone receptor family.

It localises to the nucleus. Functionally, orphan nuclear receptor. The polypeptide is Nuclear hormone receptor family member nhr-16 (nhr-16) (Caenorhabditis elegans).